Reading from the N-terminus, the 338-residue chain is MLAVRSLQHLTTVIFITAYGLVLAWYIVFGASPLHRCIYAVRPAGAHNDTALVWMKINQTLLFLGPPTAPPGGAWTPHARVCYANIIEGRAVSLPAIPGAMSRRVMNVHEAVNCLEALWDTQMRLVVVGWFLYLAFVALHQRRCMFGVVSPAHSMVAPATYLLNYAGRIVSSVFLQYPYTKITRLLCELSVQRQTLVQLFEADPVTFLYHRPAIGVIVGCELLLRFVALGLIVGTALISRGACAITHPLFLTITTWCFVSIIALTELYFILRRGSAPKNAEPAAPRGRSKGWSGVCGRCCSIILSGIAVRLCYIAVVAGVVLVALRYEQEIQRRLFDL.

The signal sequence occupies residues 1–30 (MLAVRSLQHLTTVIFITAYGLVLAWYIVFG). Over 31-121 (ASPLHRCIYA…VNCLEALWDT (91 aa)) the chain is Extracellular. The involved in fusion stretch occupies residues 31-121 (ASPLHRCIYA…VNCLEALWDT (91 aa)). N-linked (GlcNAc...) asparagine; by host glycosylation is found at Asn48 and Asn58. Residues 122–140 (QMRLVVVGWFLYLAFVALH) traverse the membrane as a helical segment. Residues 141–212 (QRRCMFGVVS…DPVTFLYHRP (72 aa)) lie on the Cytoplasmic side of the membrane. The chain crosses the membrane as a helical span at residues 213 to 233 (AIGVIVGCELLLRFVALGLIV). Residues 234 to 243 (GTALISRGAC) are Extracellular-facing. A helical membrane pass occupies residues 244 to 264 (AITHPLFLTITTWCFVSIIAL). The Cytoplasmic portion of the chain corresponds to 265-301 (TELYFILRRGSAPKNAEPAAPRGRSKGWSGVCGRCCS). The tract at residues 265–301 (TELYFILRRGSAPKNAEPAAPRGRSKGWSGVCGRCCS) is interaction with UL20. A helical transmembrane segment spans residues 302–322 (IILSGIAVRLCYIAVVAGVVL). Residues 323 to 338 (VALRYEQEIQRRLFDL) lie on the Extracellular side of the membrane.

Belongs to the alphaherpesvirinae glycoprotein K family. Interacts (via UL20 interaction region) with protein UL20 (via N-terminus); this interaction probably plays a role in the coordinate transport of protein UL20 and gK to the trans-Golgi network (TGN), and is required for the cell surface expression of gK. Post-translationally, N-glycosylated.

The protein localises to the host cell membrane. It localises to the host endosome membrane. Its subcellular location is the host Golgi apparatus membrane. Functionally, glycoprotein that probably modulates membrane fusion events during secondary envelopment of cytoplasmic capsids that bud into specific trans-Golgi network (TGN)-derived membranes. Also plays a role, together with gB, in virus-induced cell-to-cell fusion (syncytia formation). Seems to block fusion of virions with infected-cell membranes. The sequence is that of Envelope glycoprotein K (gK) from Human herpesvirus 2 (strain HG52) (HHV-2).